The primary structure comprises 404 residues: Tryptophan synthase beta chain (404 aa).

Residue Lys-94 is modified to N6-(pyridoxal phosphate)lysine.

The protein belongs to the TrpB family. As to quaternary structure, tetramer of two alpha and two beta chains. The cofactor is pyridoxal 5'-phosphate.

It carries out the reaction (1S,2R)-1-C-(indol-3-yl)glycerol 3-phosphate + L-serine = D-glyceraldehyde 3-phosphate + L-tryptophan + H2O. It functions in the pathway amino-acid biosynthesis; L-tryptophan biosynthesis; L-tryptophan from chorismate: step 5/5. Its function is as follows. The beta subunit is responsible for the synthesis of L-tryptophan from indole and L-serine. The protein is Tryptophan synthase beta chain of Staphylococcus saprophyticus subsp. saprophyticus (strain ATCC 15305 / DSM 20229 / NCIMB 8711 / NCTC 7292 / S-41).